The following is a 342-amino-acid chain: Succinylglutamate desuccinylase (342 aa).

3 residues coordinate Zn(2+): histidine 64, glutamate 67, and histidine 159. Glutamate 222 is an active-site residue.

The protein belongs to the AspA/AstE family. Succinylglutamate desuccinylase subfamily. It depends on Zn(2+) as a cofactor.

The enzyme catalyses N-succinyl-L-glutamate + H2O = L-glutamate + succinate. It functions in the pathway amino-acid degradation; L-arginine degradation via AST pathway; L-glutamate and succinate from L-arginine: step 5/5. Transforms N(2)-succinylglutamate into succinate and glutamate. The chain is Succinylglutamate desuccinylase from Burkholderia orbicola (strain AU 1054).